Reading from the N-terminus, the 128-residue chain is Large ribosomal subunit protein bL12 (128 aa).

It belongs to the bacterial ribosomal protein bL12 family. Homodimer. Part of the ribosomal stalk of the 50S ribosomal subunit. Forms a multimeric L10(L12)X complex, where L10 forms an elongated spine to which 2 to 4 L12 dimers bind in a sequential fashion. Binds GTP-bound translation factors.

Its function is as follows. Forms part of the ribosomal stalk which helps the ribosome interact with GTP-bound translation factors. Is thus essential for accurate translation. This is Large ribosomal subunit protein bL12 from Desulfovibrio desulfuricans (strain ATCC 27774 / DSM 6949 / MB).